Reading from the N-terminus, the 199-residue chain is NAD(P)H dehydrogenase (quinone) (199 aa).

The 187-residue stretch at 4 to 190 (VLVLYYSAYG…AGARYQGKTI (187 aa)) folds into the Flavodoxin-like domain. FMN-binding positions include 10 to 15 (SAYGHI) and 78 to 80 (TRF). Tyr12 contributes to the NAD(+) binding site. Trp98 is a substrate binding site. FMN is bound by residues 113–119 (STATQHG) and His134.

This sequence belongs to the WrbA family. Requires FMN as cofactor.

It catalyses the reaction a quinone + NADH + H(+) = a quinol + NAD(+). It carries out the reaction a quinone + NADPH + H(+) = a quinol + NADP(+). In Rhodopseudomonas palustris (strain HaA2), this protein is NAD(P)H dehydrogenase (quinone).